Consider the following 304-residue polypeptide: UDP-3-O-acyl-N-acetylglucosamine deacetylase (304 aa).

His78, His237, and Asp241 together coordinate Zn(2+). His264 (proton donor) is an active-site residue.

Belongs to the LpxC family. Zn(2+) serves as cofactor.

The enzyme catalyses a UDP-3-O-[(3R)-3-hydroxyacyl]-N-acetyl-alpha-D-glucosamine + H2O = a UDP-3-O-[(3R)-3-hydroxyacyl]-alpha-D-glucosamine + acetate. It functions in the pathway glycolipid biosynthesis; lipid IV(A) biosynthesis; lipid IV(A) from (3R)-3-hydroxytetradecanoyl-[acyl-carrier-protein] and UDP-N-acetyl-alpha-D-glucosamine: step 2/6. Functionally, catalyzes the hydrolysis of UDP-3-O-myristoyl-N-acetylglucosamine to form UDP-3-O-myristoylglucosamine and acetate, the committed step in lipid A biosynthesis. The chain is UDP-3-O-acyl-N-acetylglucosamine deacetylase from Polynucleobacter necessarius subsp. necessarius (strain STIR1).